We begin with the raw amino-acid sequence, 318 residues long: Transaldolase (318 aa).

The active-site Schiff-base intermediate with substrate is Lys-132.

The protein belongs to the transaldolase family. Type 1 subfamily. In terms of assembly, homodimer.

It localises to the cytoplasm. It catalyses the reaction D-sedoheptulose 7-phosphate + D-glyceraldehyde 3-phosphate = D-erythrose 4-phosphate + beta-D-fructose 6-phosphate. It functions in the pathway carbohydrate degradation; pentose phosphate pathway; D-glyceraldehyde 3-phosphate and beta-D-fructose 6-phosphate from D-ribose 5-phosphate and D-xylulose 5-phosphate (non-oxidative stage): step 2/3. Its function is as follows. Transaldolase is important for the balance of metabolites in the pentose-phosphate pathway. The protein is Transaldolase of Shewanella sp. (strain MR-7).